A 631-amino-acid chain; its full sequence is ATP-dependent RNA helicase mrh4, mitochondrial (631 aa).

The N-terminal 45 residues, M1 to R45, are a transit peptide targeting the mitochondrion. Residues K68–L112 form a disordered region. The span at R98 to K108 shows a compositional bias: basic and acidic residues. The Q motif motif lies at T141–R174. The segment covering L180–A193 has biased composition (basic and acidic residues). Positions L180–R199 are disordered. Residues D194 to L406 enclose the Helicase ATP-binding domain. A207–T214 provides a ligand contact to ATP. Positions E229–E249 are disordered. Positions D353–D356 match the DEAD box motif. The 177-residue stretch at G455 to I631 folds into the Helicase C-terminal domain.

This sequence belongs to the DEAD box helicase family. MRH4 subfamily.

It localises to the mitochondrion. The enzyme catalyses ATP + H2O = ADP + phosphate + H(+). In terms of biological role, ATP-binding RNA helicase involved in mitochondrial RNA metabolism. Required for maintenance of mitochondrial DNA. The polypeptide is ATP-dependent RNA helicase mrh4, mitochondrial (mrh4) (Aspergillus fumigatus (strain ATCC MYA-4609 / CBS 101355 / FGSC A1100 / Af293) (Neosartorya fumigata)).